The primary structure comprises 964 residues: MMIPELGRRPMHRGNEDSSFGDDYEKEIGVLLGEQQRRQVEADELERELNLYRSGSAPPTVDGSLSAAGGLFSGGGGASFLEFGGVNKGNGFGGDDEEFRKDPAYLSYYYANMKLNPRLPPPLMSREDLRVAQRLKGSNNVLGGVGDRRKVNDSRSLFSMPPGFEAGKPGASASEWDANGLIGLGLGGKQKSFADIFQADMGHPVVQQPSRPASRNTFDENVDSNNNLSPSASQGIGAPSPYCYAAVLGSSLSRNGTPDPQGIARVPSPCLTPIGSGRVSSNDKRNTSNQSPFNGVTSGLNESSDLVNALSGLNLSGTGGLDERGQAEQDVEKVRNYMFGLQDGHNEVNPHGFPNRSDQARGTASCRNSQMRGSQGSAYNSGSGVANPYQHHDSPNYYALNPAVASMMANQLGTNNYSPMYENASATLGYSAMDSRLHGGSFVSSGQNLSESRNIGRVGNRMMEGGTGHPSHLADPMYHQYARFSENADSFDLLNDPSMDRNYGNSYMNMLEIQRAYLGSQKSQYGLPYKSGSPNSHSYYGSPTFGSNMSYPGSPLAHHGMPNSLMSPYSPMRRGEVNMRYPAATRNYTGGVMGSWHMDASLDEGFGSSMLEEFKSNKTRGFELSEIAGHVVEFSSDQYGSRFIQQKLETATTDEKNMVYEEIMPKALALMTDVFGNYVIQKFFEHGLPPQRRELGEKLIDNVLPLSLQMYGCRVIQKAIEVVDLDQKIQMVKELDGHVMRCVRDQNGNHVVQKCIECVPEENIEFIISTFFGHVVTLSTHPYGCRVIQRVLEHCHNPDTQSKVMEEILSTVSMLTQDQYGNYVVQHVLEHGKPDERTVIIKELAGKIVQMSQQKFASNVVEKCLTFGGPEERELLVNEMLGTTDENEPLQAMMKDQFANYVVQKVLETCDDQQRELILTRIKVHLNALKKYTYGKHIVARVEKLVAAGERRMALQSLPQPLVA.

Residues Met1–Asp22 form a disordered region. Residue Ser192 is modified to Phosphoserine. Disordered stretches follow at residues Pro204 to Gly235, Gly256 to Leu300, and Asp343 to Pro388. Polar residues-rich tracts occupy residues Gln207–Asn216 and Asp223–Gln234. A Phosphothreonine modification is found at Thr257. Composition is skewed to polar residues over residues Thr287–Leu300 and Arg356–Gly384. In terms of domain architecture, PUM-HD spans Phe606–Val946. Pumilio repeat units follow at residues Glu626–Glu661, Glu662–Glu697, Lys698–Lys733, Glu734–Ser769, Thr770–Glu806, Glu807–Lys842, Glu843–Asn878, and Glu879–Thr920.

The protein localises to the cytoplasm. Sequence-specific RNA-binding protein that regulates translation and mRNA stability by binding the 3'-UTR of target mRNAs. Binds the APUM-binding elements (APBEs) in the 3'-UTR mRNA sequence of CLV1, PNH, WUS and FAS2. This chain is Pumilio homolog 3 (APUM3), found in Arabidopsis thaliana (Mouse-ear cress).